Consider the following 636-residue polypeptide: Serine/threonine-protein kinase hal4 (636 aa).

Positions 1 to 11 (MGEKDKLHEIS) are enriched in basic and acidic residues. Disordered regions lie at residues 1 to 167 (MGEK…AGVV) and 181 to 261 (AASP…PSSA). Positions 33–45 (EPPPPSSQQPPST) are enriched in pro residues. Polar residues-rich tracts occupy residues 56 to 92 (ALKQ…QQPL) and 113 to 124 (NPSRHVSSTSNK). Positions 140–155 (PSGSVPPSASVSRANS) are enriched in low complexity. The span at 182–226 (ASPNPSTPSNGPAPVSTTATPSRNPVTRLQRIFSQNSVSRQNSRT) shows a compositional bias: polar residues. S218 carries the phosphoserine modification. The segment covering 234-261 (NTEETNSTGGSETGGAANSSSTSNPSSA) has biased composition (low complexity). 2 positions are modified to phosphothreonine: T238 and T241. At S299 the chain carries Phosphoserine. A Protein kinase domain is found at 351–623 (GRCQEVIGRG…AKQIMKSEWV (273 aa)). Residues 357 to 365 (IGRGAFGVV) and K385 contribute to the ATP site. The Proton acceptor role is filled by D481.

Belongs to the protein kinase superfamily. Ser/Thr protein kinase family. Interacts with sty1.

It is found in the cytoplasm. It carries out the reaction L-seryl-[protein] + ATP = O-phospho-L-seryl-[protein] + ADP + H(+). It catalyses the reaction L-threonyl-[protein] + ATP = O-phospho-L-threonyl-[protein] + ADP + H(+). Promotes K(+) uptake, by the potassium transporter trk1-trk2, which leads to the subsequent cellular resistance to toxic cations such as Na(+), Li(+) and Ca(2+). The polypeptide is Serine/threonine-protein kinase hal4 (hal4) (Schizosaccharomyces pombe (strain 972 / ATCC 24843) (Fission yeast)).